The chain runs to 376 residues: Putative transmembrane protein 183BP (376 aa).

Disordered stretches follow at residues 1–20 (MARGPGPLGRPRPDTVAMPK) and 102–127 (AQEENIHERTVSRKKKSKRHKEELDG). The helical transmembrane segment at 300-320 (LNFIFIPIVMGMIFTLFTINV) threads the bilayer.

Belongs to the TMEM183 family. Expressed in brain, lung, pancreas, thymus, intestine and blood. Not detected in heart, placenta, liver, muscle, kidney, spleen, prostate, testis, ovary and colon.

The protein resides in the membrane. In Homo sapiens (Human), this protein is Putative transmembrane protein 183BP.